Here is a 337-residue protein sequence, read N- to C-terminus: tRNA N6-adenosine threonylcarbamoyltransferase (337 aa).

Fe cation-binding residues include H111 and H115. Residues L134–G138, D167, G180, and N272 contribute to the substrate site. D300 contacts Fe cation.

It belongs to the KAE1 / TsaD family. The cofactor is Fe(2+).

Its subcellular location is the cytoplasm. The catalysed reaction is L-threonylcarbamoyladenylate + adenosine(37) in tRNA = N(6)-L-threonylcarbamoyladenosine(37) in tRNA + AMP + H(+). In terms of biological role, required for the formation of a threonylcarbamoyl group on adenosine at position 37 (t(6)A37) in tRNAs that read codons beginning with adenine. Is involved in the transfer of the threonylcarbamoyl moiety of threonylcarbamoyl-AMP (TC-AMP) to the N6 group of A37, together with TsaE and TsaB. TsaD likely plays a direct catalytic role in this reaction. This Photorhabdus laumondii subsp. laumondii (strain DSM 15139 / CIP 105565 / TT01) (Photorhabdus luminescens subsp. laumondii) protein is tRNA N6-adenosine threonylcarbamoyltransferase.